The chain runs to 403 residues: NADH-quinone oxidoreductase subunit D (403 aa).

This sequence belongs to the complex I 49 kDa subunit family. As to quaternary structure, NDH-1 is composed of 14 different subunits. Subunits NuoB, C, D, E, F, and G constitute the peripheral sector of the complex.

Its subcellular location is the cell inner membrane. It carries out the reaction a quinone + NADH + 5 H(+)(in) = a quinol + NAD(+) + 4 H(+)(out). Functionally, NDH-1 shuttles electrons from NADH, via FMN and iron-sulfur (Fe-S) centers, to quinones in the respiratory chain. The immediate electron acceptor for the enzyme in this species is believed to be ubiquinone. Couples the redox reaction to proton translocation (for every two electrons transferred, four hydrogen ions are translocated across the cytoplasmic membrane), and thus conserves the redox energy in a proton gradient. This is NADH-quinone oxidoreductase subunit D from Erythrobacter litoralis (strain HTCC2594).